Here is a 95-residue protein sequence, read N- to C-terminus: Aspartyl/glutamyl-tRNA(Asn/Gln) amidotransferase subunit C (95 aa).

It belongs to the GatC family. Heterotrimer of A, B and C subunits.

It carries out the reaction L-glutamyl-tRNA(Gln) + L-glutamine + ATP + H2O = L-glutaminyl-tRNA(Gln) + L-glutamate + ADP + phosphate + H(+). The enzyme catalyses L-aspartyl-tRNA(Asn) + L-glutamine + ATP + H2O = L-asparaginyl-tRNA(Asn) + L-glutamate + ADP + phosphate + 2 H(+). Allows the formation of correctly charged Asn-tRNA(Asn) or Gln-tRNA(Gln) through the transamidation of misacylated Asp-tRNA(Asn) or Glu-tRNA(Gln) in organisms which lack either or both of asparaginyl-tRNA or glutaminyl-tRNA synthetases. The reaction takes place in the presence of glutamine and ATP through an activated phospho-Asp-tRNA(Asn) or phospho-Glu-tRNA(Gln). The protein is Aspartyl/glutamyl-tRNA(Asn/Gln) amidotransferase subunit C of Rhodopseudomonas palustris (strain BisB18).